The primary structure comprises 474 residues: Neuronal acetylcholine receptor subunit eat-2 (474 aa).

Positions 1-21 are cleaved as a signal peptide; it reads MTLKIAFFTLILLVSIERVYS. Residues 22-237 lie on the Extracellular side of the membrane; the sequence is SDEEYRLLKD…MHLKRRTMYY (216 aa). The N-linked (GlcNAc...) asparagine glycan is linked to Asn95. Cysteines 149 and 163 form a disulfide. A run of 3 helical transmembrane segments spans residues 238 to 258, 266 to 286, and 303 to 323; these read GLNW…GFTM, ITLQ…VSEV, and LSIV…NIFF. The Cytoplasmic segment spans residues 324–440; sequence RHPKTHRMGD…WRFMAMVIDR (117 aa). Positions 359 to 378 are disordered; that stretch reads PRREEEKNDEEAGGDGTKLL. A helical membrane pass occupies residues 441-461; sequence LSLFLFTGLIFGTTALIFAFC.

It belongs to the ligand-gated ion channel (TC 1.A.9) family. Acetylcholine receptor (TC 1.A.9.1) subfamily. In terms of assembly, neuronal AChR seems to be composed of two different type of subunits: alpha and beta. Expressed in pharyngeal muscle.

It is found in the postsynaptic cell membrane. It localises to the cell membrane. After binding acetylcholine, the AChR responds by an extensive change in conformation that affects all subunits and leads to opening of an ion-conducting channel across the plasma membrane. Nicotinic acetylcholine receptor in the MC pharyngeal motor neuron involved in pharyngeal pumping. Has a role in the determination of life span possibly via calorific restriction which affects growth rate, although this is independent of metabolic activity. Plays a role in the defense against the accumulation of ingested live pathogenic bacteria in the intestine. In Caenorhabditis elegans, this protein is Neuronal acetylcholine receptor subunit eat-2.